A 193-amino-acid chain; its full sequence is MRLTDIEIEQALDNGSIVIEPRPSNDAISGVSVDVRLGGQFRVFKDHTAPFIDLSGPSTEVQAALDRVMSEIIEIPDGEAFFLHPGELALAVTYESVTLPADIVGWLDGRSSLARLGLMVHVTAHRIDPGWQGKIVLEFYNSGKLPLALRPRMTIGALNFERLSGPVARPYNKRKNAKYKDQQDAVASRISQD.

DCTP contacts are provided by residues 110-115 (RSSLAR), aspartate 128, 136-138 (VLE), tyrosine 171, lysine 178, and glutamine 182. Glutamate 138 (proton donor/acceptor) is an active-site residue. A disordered region spans residues 173-193 (KRKNAKYKDQQDAVASRISQD).

It belongs to the dCTP deaminase family. As to quaternary structure, homotrimer.

The catalysed reaction is dCTP + H2O + H(+) = dUTP + NH4(+). The protein operates within pyrimidine metabolism; dUMP biosynthesis; dUMP from dCTP (dUTP route): step 1/2. Its function is as follows. Catalyzes the deamination of dCTP to dUTP. The protein is dCTP deaminase of Shewanella sp. (strain ANA-3).